The chain runs to 266 residues: Type III pantothenate kinase (266 aa).

15 to 22 (EIGNSSTS) contacts ATP. Substrate is bound by residues Tyr-105 and 112-115 (GADR). Asp-114 functions as the Proton acceptor in the catalytic mechanism. Asp-135 is a K(+) binding site. Thr-138 contacts ATP. Thr-191 contacts substrate.

The protein belongs to the type III pantothenate kinase family. As to quaternary structure, homodimer. NH4(+) serves as cofactor. The cofactor is K(+).

It is found in the cytoplasm. The enzyme catalyses (R)-pantothenate + ATP = (R)-4'-phosphopantothenate + ADP + H(+). The protein operates within cofactor biosynthesis; coenzyme A biosynthesis; CoA from (R)-pantothenate: step 1/5. In terms of biological role, catalyzes the phosphorylation of pantothenate (Pan), the first step in CoA biosynthesis. The protein is Type III pantothenate kinase of Chlorobium chlorochromatii (strain CaD3).